The following is a 461-amino-acid chain: Bifunctional protein HldE (461 aa).

A ribokinase region spans residues 1-312; the sequence is MLEFLSQQKP…IKSFNRVDFE (312 aa). Position 191–194 (191–194) interacts with ATP; the sequence is NKKE. Asp-259 is a catalytic residue. The interval 334-461 is cytidylyltransferase; sequence FTNGCFDIVH…KIIEKIKDKK (128 aa).

The protein in the N-terminal section; belongs to the carbohydrate kinase PfkB family. It in the C-terminal section; belongs to the cytidylyltransferase family. As to quaternary structure, homodimer.

The enzyme catalyses D-glycero-beta-D-manno-heptose 7-phosphate + ATP = D-glycero-beta-D-manno-heptose 1,7-bisphosphate + ADP + H(+). The catalysed reaction is D-glycero-beta-D-manno-heptose 1-phosphate + ATP + H(+) = ADP-D-glycero-beta-D-manno-heptose + diphosphate. Its pathway is nucleotide-sugar biosynthesis; ADP-L-glycero-beta-D-manno-heptose biosynthesis; ADP-L-glycero-beta-D-manno-heptose from D-glycero-beta-D-manno-heptose 7-phosphate: step 1/4. The protein operates within nucleotide-sugar biosynthesis; ADP-L-glycero-beta-D-manno-heptose biosynthesis; ADP-L-glycero-beta-D-manno-heptose from D-glycero-beta-D-manno-heptose 7-phosphate: step 3/4. Its function is as follows. Catalyzes the phosphorylation of D-glycero-D-manno-heptose 7-phosphate at the C-1 position to selectively form D-glycero-beta-D-manno-heptose-1,7-bisphosphate. Catalyzes the ADP transfer from ATP to D-glycero-beta-D-manno-heptose 1-phosphate, yielding ADP-D-glycero-beta-D-manno-heptose. This chain is Bifunctional protein HldE, found in Campylobacter jejuni subsp. jejuni serotype O:6 (strain 81116 / NCTC 11828).